Here is a 452-residue protein sequence, read N- to C-terminus: Bifunctional protein GlmU (452 aa).

The interval 1 to 226 (MAFSVVVLAA…AVEVEGVNNR (226 aa)) is pyrophosphorylase. UDP-N-acetyl-alpha-D-glucosamine contacts are provided by residues 8 to 11 (LAAG), lysine 22, glutamine 73, and 78 to 79 (GT). Aspartate 102 lines the Mg(2+) pocket. Positions 137, 151, 166, and 224 each coordinate UDP-N-acetyl-alpha-D-glucosamine. Mg(2+) is bound at residue asparagine 224. The linker stretch occupies residues 227–247 (LQLANLERALQNRQADELMTN). Residues 248 to 452 (GVTLLDPSRF…IPNWPRPTKK (205 aa)) are N-acetyltransferase. Residues arginine 330 and lysine 348 each coordinate UDP-N-acetyl-alpha-D-glucosamine. Histidine 360 (proton acceptor) is an active-site residue. UDP-N-acetyl-alpha-D-glucosamine contacts are provided by tyrosine 363 and asparagine 374. Residues alanine 377, 383-384 (NY), serine 402, alanine 420, and arginine 437 each bind acetyl-CoA.

The protein in the N-terminal section; belongs to the N-acetylglucosamine-1-phosphate uridyltransferase family. This sequence in the C-terminal section; belongs to the transferase hexapeptide repeat family. As to quaternary structure, homotrimer. Mg(2+) serves as cofactor.

The protein localises to the cytoplasm. It carries out the reaction alpha-D-glucosamine 1-phosphate + acetyl-CoA = N-acetyl-alpha-D-glucosamine 1-phosphate + CoA + H(+). It catalyses the reaction N-acetyl-alpha-D-glucosamine 1-phosphate + UTP + H(+) = UDP-N-acetyl-alpha-D-glucosamine + diphosphate. The protein operates within nucleotide-sugar biosynthesis; UDP-N-acetyl-alpha-D-glucosamine biosynthesis; N-acetyl-alpha-D-glucosamine 1-phosphate from alpha-D-glucosamine 6-phosphate (route II): step 2/2. Its pathway is nucleotide-sugar biosynthesis; UDP-N-acetyl-alpha-D-glucosamine biosynthesis; UDP-N-acetyl-alpha-D-glucosamine from N-acetyl-alpha-D-glucosamine 1-phosphate: step 1/1. It participates in bacterial outer membrane biogenesis; LPS lipid A biosynthesis. In terms of biological role, catalyzes the last two sequential reactions in the de novo biosynthetic pathway for UDP-N-acetylglucosamine (UDP-GlcNAc). The C-terminal domain catalyzes the transfer of acetyl group from acetyl coenzyme A to glucosamine-1-phosphate (GlcN-1-P) to produce N-acetylglucosamine-1-phosphate (GlcNAc-1-P), which is converted into UDP-GlcNAc by the transfer of uridine 5-monophosphate (from uridine 5-triphosphate), a reaction catalyzed by the N-terminal domain. This Alteromonas mediterranea (strain DSM 17117 / CIP 110805 / LMG 28347 / Deep ecotype) protein is Bifunctional protein GlmU.